The sequence spans 318 residues: Lipid A biosynthesis acyltransferase (318 aa).

A helical transmembrane segment spans residues 27–47 (PQYWGIWLGIFFLLLLAFVPF). The short motif at 145 to 150 (HGWAID) is the HXXXXD motif element.

This sequence belongs to the LpxL/LpxM/LpxP family. LpxM subfamily.

It localises to the cell inner membrane. The catalysed reaction is an alpha-Kdo-(2-&gt;4)-alpha-Kdo-(2-&gt;6)-(acyl)-lipid IVA + a fatty acyl-[ACP] = an alpha-Kdo-(2-&gt;4)-alpha-Kdo-(2-&gt;6)-lipid A + holo-[ACP]. It participates in glycolipid biosynthesis; KDO(2)-lipid A biosynthesis; KDO(2)-lipid A from CMP-3-deoxy-D-manno-octulosonate and lipid IV(A): step 4/4. Its pathway is bacterial outer membrane biogenesis; lipopolysaccharide biosynthesis. Catalyzes the transfer of an acyl chain from an acyl-[acyl-carrier-protein] (ACP) to a Kdo(2)-(acyl)-lipid IV(A) to form a Kdo(2)-lipid A. The chain is Lipid A biosynthesis acyltransferase from Haemophilus influenzae (strain ATCC 51907 / DSM 11121 / KW20 / Rd).